Consider the following 421-residue polypeptide: C2 calcium-dependent domain-containing protein 4C (421 aa).

Disordered regions lie at residues 13-97 (RGSG…AKLA), 119-140 (DWLSEEATDADPQAQGAMSLPS), 158-228 (HTRR…SPFG), and 250-303 (VSQL…TVHV). The span at 215 to 228 (ESDTGSSAESSPFG) shows a compositional bias: polar residues. Phosphoserine is present on residues Ser-262, Ser-264, and Ser-273. In terms of domain architecture, C2 spans 305 to 421 (PRGSVRLLAE…LPLTSLLPFL (117 aa)).

The protein belongs to the C2CD4 family.

In Homo sapiens (Human), this protein is C2 calcium-dependent domain-containing protein 4C (C2CD4C).